A 420-amino-acid polypeptide reads, in one-letter code: 3-phosphoshikimate 1-carboxyvinyltransferase (420 aa).

Residues Lys-26, Ser-27, and Arg-31 each coordinate 3-phosphoshikimate. Lys-26 is a phosphoenolpyruvate binding site. Positions 97 and 125 each coordinate phosphoenolpyruvate. 3-phosphoshikimate is bound by residues Ser-170, Ser-171, Gln-172, Asp-297, Asn-320, and Lys-324. Gln-172 is a binding site for phosphoenolpyruvate. Catalysis depends on Asp-297, which acts as the Proton acceptor. 3 residues coordinate phosphoenolpyruvate: Arg-328, Arg-375, and Lys-400.

This sequence belongs to the EPSP synthase family. Monomer.

Its subcellular location is the cytoplasm. The catalysed reaction is 3-phosphoshikimate + phosphoenolpyruvate = 5-O-(1-carboxyvinyl)-3-phosphoshikimate + phosphate. The protein operates within metabolic intermediate biosynthesis; chorismate biosynthesis; chorismate from D-erythrose 4-phosphate and phosphoenolpyruvate: step 6/7. Functionally, catalyzes the transfer of the enolpyruvyl moiety of phosphoenolpyruvate (PEP) to the 5-hydroxyl of shikimate-3-phosphate (S3P) to produce enolpyruvyl shikimate-3-phosphate and inorganic phosphate. The sequence is that of 3-phosphoshikimate 1-carboxyvinyltransferase from Rhizobium leguminosarum bv. trifolii (strain WSM2304).